Reading from the N-terminus, the 317-residue chain is Putative ribosomal protein uL10-like (317 aa).

Residue Tyr-24 is modified to Phosphotyrosine. At Thr-59 the chain carries Phosphothreonine. The segment at 292-317 is disordered; it reads AAAPAKVEAKEESEESDEDMGFGLFD. A Glycyl lysine isopeptide (Lys-Gly) (interchain with G-Cter in SUMO1); alternate cross-link involves residue Lys-297. Lys-297 participates in a covalent cross-link: Glycyl lysine isopeptide (Lys-Gly) (interchain with G-Cter in SUMO2); alternate. The segment covering 302 to 311 has biased composition (acidic residues); the sequence is EESEESDEDM. Phosphoserine occurs at positions 304 and 307.

This sequence belongs to the universal ribosomal protein uL10 family. P0 forms a pentameric complex by interaction with dimers of P1 and P2.

Ribosomal protein P0 is the functional equivalent of E.coli protein L10. This is Putative ribosomal protein uL10-like (RPLP0P6) from Homo sapiens (Human).